A 296-amino-acid polypeptide reads, in one-letter code: Elongation factor Ts (296 aa).

Residues 79-82 (TDFV) form an involved in Mg(2+) ion dislocation from EF-Tu region.

The protein belongs to the EF-Ts family.

It is found in the cytoplasm. In terms of biological role, associates with the EF-Tu.GDP complex and induces the exchange of GDP to GTP. It remains bound to the aminoacyl-tRNA.EF-Tu.GTP complex up to the GTP hydrolysis stage on the ribosome. The chain is Elongation factor Ts from Paracoccus denitrificans (strain Pd 1222).